A 205-amino-acid chain; its full sequence is uncharacterized protein (205 aa).

Residues 1 to 25 (MSNNNNEAQQPVESTNVESQQNVVQ) show a composition bias toward polar residues. Residues 1-205 (MSNNNNEAQQ…TSDPAQQVEA (205 aa)) form a disordered region. The segment covering 32-79 (NENNDNNNNNNNNNNNNNNNNNNNNNNNNSNNNNNSSNNENNENNENN) has biased composition (low complexity). Positions 80–122 (SCEKSEQEKPKEPEEPVQEEKSKEPCDQQKVKENEPAEEKETE) are enriched in basic and acidic residues. 2 stretches are compositionally biased toward low complexity: residues 123-132 (PAAPVEPENP) and 146-162 (QHQQ…NGES). The segment covering 170–185 (SENKKRSIDEAGDIKD) has biased composition (basic and acidic residues). Residues 194 to 205 (VETSDPAQQVEA) are compositionally biased toward polar residues.

This is an uncharacterized protein from Dictyostelium discoideum (Social amoeba).